The chain runs to 543 residues: CTP synthase (543 aa).

Residues 1–267 (MKQTKYIFVT…LSPIAEILDL (267 aa)) are amidoligase domain. Ser15 contributes to the CTP binding site. Ser15 contributes to the UTP binding site. ATP is bound by residues 16–21 (SLGKGI) and Asp73. 2 residues coordinate Mg(2+): Asp73 and Glu141. CTP is bound by residues 148 to 150 (DIE), 188 to 193 (KTKPTQ), and Lys224. UTP contacts are provided by residues 188–193 (KTKPTQ) and Lys224. Residues 292 to 543 (KIAFVGKYVD…IKAAINYEDN (252 aa)) form the Glutamine amidotransferase type-1 domain. Gly354 is an L-glutamine binding site. The active-site Nucleophile; for glutamine hydrolysis is the Cys381. Residues 382–385 (LGMQ), Glu405, and Arg473 contribute to the L-glutamine site. Residues His516 and Glu518 contribute to the active site.

This sequence belongs to the CTP synthase family. As to quaternary structure, homotetramer.

The catalysed reaction is UTP + L-glutamine + ATP + H2O = CTP + L-glutamate + ADP + phosphate + 2 H(+). It carries out the reaction L-glutamine + H2O = L-glutamate + NH4(+). It catalyses the reaction UTP + NH4(+) + ATP = CTP + ADP + phosphate + 2 H(+). Its pathway is pyrimidine metabolism; CTP biosynthesis via de novo pathway; CTP from UDP: step 2/2. Its activity is regulated as follows. Allosterically activated by GTP, when glutamine is the substrate; GTP has no effect on the reaction when ammonia is the substrate. The allosteric effector GTP functions by stabilizing the protein conformation that binds the tetrahedral intermediate(s) formed during glutamine hydrolysis. Inhibited by the product CTP, via allosteric rather than competitive inhibition. In terms of biological role, catalyzes the ATP-dependent amination of UTP to CTP with either L-glutamine or ammonia as the source of nitrogen. Regulates intracellular CTP levels through interactions with the four ribonucleotide triphosphates. The polypeptide is CTP synthase (Campylobacter jejuni subsp. jejuni serotype O:23/36 (strain 81-176)).